A 647-amino-acid chain; its full sequence is Shugoshin-2 (647 aa).

Ser-7 carries the post-translational modification Phosphoserine. 2 coiled-coil regions span residues 28–87 (SKAQ…FHEE) and 125–145 (DEESVVKDTEEIIEQAQHDVS). Positions 171-295 (REANVFSDTQ…DTVIQSTPTK (125 aa)) are disordered. Low complexity predominate over residues 200–210 (NLSNSKPVNNN). Ser-240 is modified (phosphoserine). Polar residues-rich tracts occupy residues 242 to 253 (KSLSNKINNQAA) and 282 to 293 (RIQSDTVIQSTP). The residue at position 292 (Thr-292) is a Phosphothreonine. Phosphoserine occurs at positions 332 and 335. Polar residues-rich tracts occupy residues 375-396 (SLTSQENVGPQVTTTSLSNMTV) and 462-478 (EPPSSNGFSIAHPNNSP). 4 disordered regions span residues 375–416 (SLTS…DSSV), 453–486 (RNPPMRLSSEPPSSNGFSIAHPNNSPLRPPSLQG), 522–579 (TNLK…ERKK), and 593–647 (RNFD…TLNL). Composition is skewed to basic and acidic residues over residues 528–541 (NENDRVTKTQSRRE) and 593–602 (RNFDLPSDHV). Residues 621 to 647 (KTETANITSEAPTTSEVTLENSETLNL) are compositionally biased toward polar residues.

Belongs to the shugoshin family.

Its subcellular location is the chromosome. The protein localises to the centromere. Functionally, involved in chromosome cohesion during mitosis and meiosis by preventing premature dissociation of cohesin complex from centromeres after prophase, when most of cohesin complex dissociates from chromosomes arms. Required for faithful mitotic chromosome segregation and proper kinetochore orientation during meiosis I. In contrast to sgo1, it is dispensable for centromeric protection of rec8 during meiosis I as well as protection of rad21 during mitosis. Required to sense the lack of tension at centromeres during mitosis. The chain is Shugoshin-2 (sgo2) from Schizosaccharomyces pombe (strain 972 / ATCC 24843) (Fission yeast).